A 248-amino-acid polypeptide reads, in one-letter code: N-acylneuraminate-9-phosphatase (248 aa).

Asp-12 provides a ligand contact to Mg(2+). Residues Leu-13, Asp-14, Thr-131, Asn-132, and Lys-164 each coordinate phosphate. Mg(2+) is bound at residue Asp-14. Asp-189 lines the Mg(2+) pocket.

It belongs to the HAD-like hydrolase superfamily. NANP family. Mg(2+) serves as cofactor.

The catalysed reaction is N-acetylneuraminate 9-phosphate + H2O = N-acetylneuraminate + phosphate. The enzyme catalyses N-glycoloylneuraminate 9-phosphate + H2O = N-glycoloylneuraminate + phosphate. The protein operates within amino-sugar metabolism; N-acetylneuraminate biosynthesis. With respect to regulation, inhibited by calcium. Inhibited by vanadate, sodium orthovanadate and phosphonate. In terms of biological role, catalyzes the dephosphorylation of N-acylneuraminate 9-phosphate (Neu5Ac-9-P) to N-acetylneuraminic acid (Neu5Ac or sialic acid). Can also use N-glycoloylneuraminate 9-phosphate as substrate. The sequence is that of N-acylneuraminate-9-phosphatase from Homo sapiens (Human).